Consider the following 338-residue polypeptide: Phospho-2-dehydro-3-deoxyheptonate aldolase (338 aa).

This sequence belongs to the class-I DAHP synthase family. As to quaternary structure, homotetramer. It depends on a divalent metal cation as a cofactor.

The enzyme catalyses D-erythrose 4-phosphate + phosphoenolpyruvate + H2O = 7-phospho-2-dehydro-3-deoxy-D-arabino-heptonate + phosphate. It participates in metabolic intermediate biosynthesis; chorismate biosynthesis; chorismate from D-erythrose 4-phosphate and phosphoenolpyruvate: step 1/7. Its activity is regulated as follows. Inhibited by L-phenylalanine and L-tyrosine. In terms of biological role, catalyzes the condensation of phosphoenolpyruvate (PEP) and D-erythrose-4-phosphate (E4P) giving rise to 3-deoxy-D-arabino-heptulosonate-7-phosphate (DAHP). This chain is Phospho-2-dehydro-3-deoxyheptonate aldolase (aroF), found in Thermotoga maritima (strain ATCC 43589 / DSM 3109 / JCM 10099 / NBRC 100826 / MSB8).